We begin with the raw amino-acid sequence, 546 residues long: CTP synthase (546 aa).

The segment at 1-266 (MAKYYIFITG…DSYVCDRFCI (266 aa)) is amidoligase domain. Serine 14 provides a ligand contact to CTP. UTP is bound at residue serine 14. ATP is bound by residues 15 to 20 (SLGKGI) and aspartate 72. Mg(2+)-binding residues include aspartate 72 and glutamate 140. CTP is bound by residues 147 to 149 (DIE), 187 to 192 (KTKPTQ), and lysine 223. UTP is bound by residues 187-192 (KTKPTQ) and lysine 223. The Glutamine amidotransferase type-1 domain maps to 291 to 544 (NIGIIGKYTE…VKAAFDFKNK (254 aa)). Residue glycine 352 participates in L-glutamine binding. The active-site Nucleophile; for glutamine hydrolysis is cysteine 379. L-glutamine contacts are provided by residues 380-383 (LGMQ), glutamate 403, and arginine 470. Active-site residues include histidine 517 and glutamate 519.

Belongs to the CTP synthase family. Homotetramer.

The enzyme catalyses UTP + L-glutamine + ATP + H2O = CTP + L-glutamate + ADP + phosphate + 2 H(+). It carries out the reaction L-glutamine + H2O = L-glutamate + NH4(+). The catalysed reaction is UTP + NH4(+) + ATP = CTP + ADP + phosphate + 2 H(+). It participates in pyrimidine metabolism; CTP biosynthesis via de novo pathway; CTP from UDP: step 2/2. With respect to regulation, allosterically activated by GTP, when glutamine is the substrate; GTP has no effect on the reaction when ammonia is the substrate. The allosteric effector GTP functions by stabilizing the protein conformation that binds the tetrahedral intermediate(s) formed during glutamine hydrolysis. Inhibited by the product CTP, via allosteric rather than competitive inhibition. In terms of biological role, catalyzes the ATP-dependent amination of UTP to CTP with either L-glutamine or ammonia as the source of nitrogen. Regulates intracellular CTP levels through interactions with the four ribonucleotide triphosphates. This Wigglesworthia glossinidia brevipalpis protein is CTP synthase.